A 688-amino-acid chain; its full sequence is Elongation factor G (688 aa).

Residues Glu8–Met282 enclose the tr-type G domain. Residues Ala17–Thr24, Asp81–His85, and Asn135–Asp138 contribute to the GTP site.

This sequence belongs to the TRAFAC class translation factor GTPase superfamily. Classic translation factor GTPase family. EF-G/EF-2 subfamily.

It localises to the cytoplasm. Catalyzes the GTP-dependent ribosomal translocation step during translation elongation. During this step, the ribosome changes from the pre-translocational (PRE) to the post-translocational (POST) state as the newly formed A-site-bound peptidyl-tRNA and P-site-bound deacylated tRNA move to the P and E sites, respectively. Catalyzes the coordinated movement of the two tRNA molecules, the mRNA and conformational changes in the ribosome. The protein is Elongation factor G (fusA) of Apple proliferation phytoplasma.